Reading from the N-terminus, the 814-residue chain is ATP-dependent RNA helicase dbp-7 (814 aa).

The interval 26-102 is disordered; that stretch reads GGRWRDRVKA…PPPPPTHAMK (77 aa). 2 stretches are compositionally biased toward basic and acidic residues: residues 28-42 and 69-78; these read RWRD…EKGG and QRTEDGDSGR. Residues 145–174 carry the Q motif motif; that stretch reads ENFLSLGLSRRVSQHLATKLEMKAPTAIQK. The region spanning 178 to 384 is the Helicase ATP-binding domain; it reads PQLVKEDSDA…EISLEDAVHI (207 aa). 191 to 198 contributes to the ATP binding site; it reads AETGSGKT. A DEAD box motif is present at residues 313 to 316; it reads DEGD. One can recognise a Helicase C-terminal domain in the interval 422 to 622; it reads RLVTLIALLK…GFATNINVPG (201 aa). Disordered stretches follow at residues 464–483, 662–695, and 741–795; these read TPRA…KPNI, ESKS…PLLV, and GIGG…AGRR. A compositionally biased stretch (basic and acidic residues) spans 467–477; that stretch reads AEPEPKPEGEA. The span at 779–790 shows a compositional bias: acidic residues; the sequence is DDDERDFGAADE.

This sequence belongs to the DEAD box helicase family. DDX31/DBP7 subfamily.

Its subcellular location is the nucleus. The protein resides in the nucleolus. The enzyme catalyses ATP + H2O = ADP + phosphate + H(+). ATP-binding RNA helicase involved in the biogenesis of 60S ribosomal subunits and is required for the normal formation of 25S and 5.8S rRNAs. The sequence is that of ATP-dependent RNA helicase dbp-7 (dbp-7) from Neurospora crassa (strain ATCC 24698 / 74-OR23-1A / CBS 708.71 / DSM 1257 / FGSC 987).